The primary structure comprises 419 residues: UDP-N-acetylglucosamine 1-carboxyvinyltransferase (419 aa).

22-23 (KN) serves as a coordination point for phosphoenolpyruvate. Arg92 serves as a coordination point for UDP-N-acetyl-alpha-D-glucosamine. Cys116 (proton donor) is an active-site residue. Position 116 is a 2-(S-cysteinyl)pyruvic acid O-phosphothioketal (Cys116). 2 residues coordinate UDP-N-acetyl-alpha-D-glucosamine: Asp306 and Ile328.

This sequence belongs to the EPSP synthase family. MurA subfamily.

Its subcellular location is the cytoplasm. It carries out the reaction phosphoenolpyruvate + UDP-N-acetyl-alpha-D-glucosamine = UDP-N-acetyl-3-O-(1-carboxyvinyl)-alpha-D-glucosamine + phosphate. The protein operates within cell wall biogenesis; peptidoglycan biosynthesis. Cell wall formation. Adds enolpyruvyl to UDP-N-acetylglucosamine. In Psychromonas ingrahamii (strain DSM 17664 / CCUG 51855 / 37), this protein is UDP-N-acetylglucosamine 1-carboxyvinyltransferase.